The following is a 290-amino-acid chain: Probable transcriptional regulatory protein HAH1 (290 aa).

It belongs to the TACO1 family.

Its subcellular location is the mitochondrion. The polypeptide is Probable transcriptional regulatory protein HAH1 (Saccharomyces cerevisiae (strain ATCC 204508 / S288c) (Baker's yeast)).